The chain runs to 544 residues: Chaperonin GroEL (544 aa).

ATP contacts are provided by residues 30-33, K51, 87-91, G415, 479-481, and D495; these read TLGP, DGTTT, and NAA.

The protein belongs to the chaperonin (HSP60) family. As to quaternary structure, forms a cylinder of 14 subunits composed of two heptameric rings stacked back-to-back. Interacts with the co-chaperonin GroES.

Its subcellular location is the cytoplasm. The catalysed reaction is ATP + H2O + a folded polypeptide = ADP + phosphate + an unfolded polypeptide.. Its function is as follows. Together with its co-chaperonin GroES, plays an essential role in assisting protein folding. The GroEL-GroES system forms a nano-cage that allows encapsulation of the non-native substrate proteins and provides a physical environment optimized to promote and accelerate protein folding. This is Chaperonin GroEL from Francisella tularensis subsp. holarctica (strain FTNF002-00 / FTA).